The sequence spans 540 residues: SNW/SKI-interacting protein B (540 aa).

Disordered stretches follow at residues 1–106, 215–273, 351–402, and 502–526; these read MVLR…SLTV, GETQ…NPKG, GAAP…RDRD, and ASVA…DPFH. Basic and acidic residues-rich tracts occupy residues 16–29 and 83–94; these read PHDH…KERY and MGRRGGDGDGEQ. Residues 189–353 form an SNW region; the sequence is PEFIKYTPAR…KARAEMLGAA (165 aa). A compositionally biased stretch (pro residues) spans 236–251; the sequence is AGSPPVPVLRSPPRPP. The segment covering 359–382 has biased composition (basic and acidic residues); it reads ERSKAAAERDAIREERRRERRLEA. Over residues 383–393 the composition is skewed to low complexity; that stretch reads RAAAAAASKKS.

Belongs to the SNW family.

Its subcellular location is the nucleus. This is SNW/SKI-interacting protein B from Oryza sativa subsp. japonica (Rice).